The chain runs to 209 residues: C-type lectin domain family 6 member A (209 aa).

Residues 1-20 (MMQEQQPQSTEKRGWLSLRL) are Cytoplasmic-facing. Residues 21–41 (WSVAGISIALLSACFIVSCVV) form a helical; Signal-anchor for type II membrane protein membrane-spanning segment. Residues 42 to 209 (TYHFTYGETG…SICEMNKIYL (168 aa)) are Extracellular-facing. 4 disulfide bridges follow: cysteine 66–cysteine 78, cysteine 79–cysteine 90, cysteine 107–cysteine 202, and cysteine 176–cysteine 194. The region spanning 86-203 (FGSSCYFISS…CETRRNSICE (118 aa)) is the C-type lectin domain. Ca(2+) contacts are provided by valine 116, asparagine 118, and glutamate 122. Asparagine 131 carries N-linked (GlcNAc...) asparagine glycosylation. Positions 168, 170, and 174 each coordinate Ca(2+). Residues 168–170 (EPN), glutamate 174, tryptophan 182, 190–191 (ND), and arginine 198 contribute to the alpha-D-mannopyranose site. An N-linked (GlcNAc...) asparagine glycan is attached at asparagine 170. Ca(2+)-binding residues include asparagine 190 and aspartate 191. Glutamate 203 is a binding site for Ca(2+).

Associated with FCER1G. Heterodimer with CLEC4D; this heterodimer forms a pattern recognition receptor (PRR) against fungal infection. As to expression, expressed in lung, spleen, lymph node, leukocytes, bone marrow, tonsils and dendritic cells. Strongly expressed in purified monocytes and weakly in B-cells. In peripheral blood cells, preferentially expressed in plasmacytoids rather than myeloids.

The protein resides in the cell membrane. Its function is as follows. Calcium-dependent lectin that acts as a pattern recognition receptor (PRR) of the innate immune system: specifically recognizes and binds alpha-mannans on C.albicans hypheas. Binding of C.albicans alpha-mannans to this receptor complex leads to phosphorylation of the immunoreceptor tyrosine-based activation motif (ITAM) of FCER1G, triggering activation of SYK, CARD9 and NF-kappa-B, consequently driving maturation of antigen-presenting cells and shaping antigen-specific priming of T-cells toward effector T-helper 1 and T-helper 17 cell subtypes. Recognizes also, in a mannose-dependent manner, allergens from house dust mite and fungi, by promoting cysteinyl leukotriene production. Recognizes soluble elements from the eggs of Shistosoma mansoni altering adaptive immune responses. This is C-type lectin domain family 6 member A from Homo sapiens (Human).